A 455-amino-acid chain; its full sequence is Chromosomal replication initiator protein DnaA (455 aa).

Residues 1–75 are domain I, interacts with DnaA modulators; that stretch reads MLERNDLWNL…AMQATNEQIR (75 aa). The segment at 75-117 is domain II; that stretch reads RPVMITEEERQQLTRDKDSQVTTGNVAGQQPTTATTPTFMRET. The span at 84-93 shows a compositional bias: basic and acidic residues; that stretch reads RQQLTRDKDS. The segment at 84–107 is disordered; it reads RQQLTRDKDSQVTTGNVAGQQPTT. Residues 118 to 334 are domain III, AAA+ region; that stretch reads KLNPKYTFDT…GALARVQAYS (217 aa). ATP is bound by residues Gly-162, Gly-164, Lys-165, and Thr-166. Positions 335–455 are domain IV, binds dsDNA; the sequence is RLNNSPITTS…VGDLTGQLKS (121 aa).

This sequence belongs to the DnaA family. As to quaternary structure, oligomerizes as a right-handed, spiral filament on DNA at oriC.

It localises to the cytoplasm. In terms of biological role, plays an essential role in the initiation and regulation of chromosomal replication. ATP-DnaA binds to the origin of replication (oriC) to initiate formation of the DNA replication initiation complex once per cell cycle. Binds the DnaA box (a 9 base pair repeat at the origin) and separates the double-stranded (ds)DNA. Forms a right-handed helical filament on oriC DNA; dsDNA binds to the exterior of the filament while single-stranded (ss)DNA is stabiized in the filament's interior. The ATP-DnaA-oriC complex binds and stabilizes one strand of the AT-rich DNA unwinding element (DUE), permitting loading of DNA polymerase. After initiation quickly degrades to an ADP-DnaA complex that is not apt for DNA replication. Binds acidic phospholipids. The chain is Chromosomal replication initiator protein DnaA from Lactiplantibacillus plantarum (strain ATCC BAA-793 / NCIMB 8826 / WCFS1) (Lactobacillus plantarum).